Here is a 94-residue protein sequence, read N- to C-terminus: MNLYEVLRRPLISEKNSVQAVQNKYVFEIAKGANKRMVKLAVEQAFNVTVEDVNMLHIPGKQKRMGRNLVQTAGLRKAIITLKEGDKITLFEGV.

Belongs to the universal ribosomal protein uL23 family. Part of the 50S ribosomal subunit. Contacts protein L29, and trigger factor when it is bound to the ribosome.

Functionally, one of the early assembly proteins it binds 23S rRNA. One of the proteins that surrounds the polypeptide exit tunnel on the outside of the ribosome. Forms the main docking site for trigger factor binding to the ribosome. The polypeptide is Large ribosomal subunit protein uL23 (Dehalococcoides mccartyi (strain ATCC BAA-2266 / KCTC 15142 / 195) (Dehalococcoides ethenogenes (strain 195))).